The chain runs to 74 residues: Metallothionein-like protein type 2 (74 aa).

Belongs to the metallothionein superfamily. Type 15 family.

Metallothioneins have a high content of cysteine residues that bind various heavy metals. This Nicotiana plumbaginifolia (Leadwort-leaved tobacco) protein is Metallothionein-like protein type 2.